Consider the following 707-residue polypeptide: GDNF-inducible zinc finger protein 1 (707 aa).

A BTB domain is found at 31–103 (CDVTVIVDYQ…VYTARVRVKE (73 aa)). Over residues 149 to 165 (VEASSGPQVSVTPSSKA) the composition is skewed to polar residues. Disordered stretches follow at residues 149–221 (VEAS…PKIR) and 243–309 (RRLR…KDGE). Basic and acidic residues-rich tracts occupy residues 198 to 213 (PSKK…KDVA), 243 to 278 (RRLR…EPAS), and 287 to 298 (VEREESLQKVEG). 10 consecutive C2H2-type zinc fingers follow at residues 316 to 338 (FQCT…IKYH), 347 to 370 (YRCD…RHVH), 376 to 399 (FPCE…LQVH), 406 to 428 (HRCG…ERTH), 434 to 456 (YGCT…LRVH), 462 to 484 (FVCD…KRCH), 490 to 512 (FMCE…NRIH), 518 to 540 (FKCE…IKVH), 546 to 568 (YCCD…HRIH), and 574 to 596 (YMCN…TSIH). Serine 612 carries the post-translational modification Phosphoserine.

This sequence belongs to the krueppel C2H2-type zinc-finger protein family. As to quaternary structure, interacts with NCL.

It is found in the cytoplasm. The protein localises to the nucleus. Its subcellular location is the nucleoplasm. It localises to the nucleolus. Transcriptional repressor that binds the GZF1 responsive element (GRE) (consensus: 5'-TGCGCN[TG][CA]TATA-3'). May be regulating VSX2/HOX10 expression. In Rattus norvegicus (Rat), this protein is GDNF-inducible zinc finger protein 1 (Gzf1).